The chain runs to 173 residues: Alpha-crystallin A chain (173 aa).

Position 1 is an N-acetylmethionine (Met1). Residues 52–162 (LFRTVLESGI…SHNERPIPVS (111 aa)) enclose the sHSP domain. Positions 100, 102, 107, and 154 each coordinate Zn(2+). A disordered region spans residues 144 to 173 (PKVQSNTDPSHNERPIPVSREEKPTSAPPS). A compositionally biased stretch (basic and acidic residues) spans 153-167 (SHNERPIPVSREEKP). A glycan (O-linked (GlcNAc) serine) is linked at Ser162.

The protein belongs to the small heat shock protein (HSP20) family. In terms of assembly, heteropolymer composed of three CRYAA and one CRYAB subunits. Inter-subunit bridging via zinc ions enhances stability, which is crucial as there is no protein turn over in the lens. Can also form homodimers and homotetramers (dimers of dimers) which serve as the building blocks of homooligomers. Within homooligomers, the zinc-binding motif is created from residues of 3 different molecules. His-100 and Glu-102 from one molecule are ligands of the zinc ion, and His-107 and His-154 residues from additional molecules complete the site with tetrahedral coordination geometry.

Its subcellular location is the cytoplasm. The protein localises to the nucleus. Functionally, contributes to the transparency and refractive index of the lens. May act as a chaperone, preventing aggregation of various proteins under a wide range of stress conditions. The protein is Alpha-crystallin A chain (CRYAA) of Tupinambis teguixin (Golden tegu).